We begin with the raw amino-acid sequence, 178 residues long: MSRIGNKVITMPAGVELTNNNNVITVKGPKGELTREFNKNIEIKVEGTEITVVRPNDSKEMKTIHGTTRANLNNMVVGVSEGFKKDLEMKGVGYRAQLQGTKLVLSVGKSHQDEVEAPEGITFTVANPTSISVEGINKEVVGQTAAYIRSLRSPEPYKGKGIRYVGEYVRLKEGKTGK.

It belongs to the universal ribosomal protein uL6 family. Part of the 50S ribosomal subunit.

This protein binds to the 23S rRNA, and is important in its secondary structure. It is located near the subunit interface in the base of the L7/L12 stalk, and near the tRNA binding site of the peptidyltransferase center. The chain is Large ribosomal subunit protein uL6 from Streptococcus pyogenes serotype M3 (strain ATCC BAA-595 / MGAS315).